Here is a 420-residue protein sequence, read N- to C-terminus: Tyrosine--tRNA ligase (420 aa).

Tyrosine 33 provides a ligand contact to L-tyrosine. A 'HIGH' region motif is present at residues proline 38–histidine 47. Tyrosine 168 and glutamine 172 together coordinate L-tyrosine. The 'KMSKS' region motif lies at lysine 231–threonine 235. Lysine 234 contacts ATP. The S4 RNA-binding domain maps to methionine 353–leucine 419.

Belongs to the class-I aminoacyl-tRNA synthetase family. TyrS type 1 subfamily. As to quaternary structure, homodimer.

It localises to the cytoplasm. It catalyses the reaction tRNA(Tyr) + L-tyrosine + ATP = L-tyrosyl-tRNA(Tyr) + AMP + diphosphate + H(+). Functionally, catalyzes the attachment of tyrosine to tRNA(Tyr) in a two-step reaction: tyrosine is first activated by ATP to form Tyr-AMP and then transferred to the acceptor end of tRNA(Tyr). In Desulfitobacterium hafniense (strain DSM 10664 / DCB-2), this protein is Tyrosine--tRNA ligase.